A 71-amino-acid chain; its full sequence is Peptide Ctri10261 (71 aa).

The N-terminal stretch at 1–23 is a signal peptide; that stretch reads MKIPLILVTIAIILLMVPTESDA. Phenylalanine 37 carries the post-translational modification Phenylalanine amide. Positions 41–71 are excised as a propeptide; the sequence is SLKNRDYFDYMQDPSLSNADLRELEELLEDY.

It belongs to the non-disulfide-bridged peptide (NDBP) superfamily. Short antimicrobial peptide (group 4) family. As to expression, expressed by the venom gland.

The protein localises to the secreted. Functionally, antimicrobial peptide. This chain is Peptide Ctri10261, found in Chaerilus tricostatus (Scorpion).